The following is a 448-amino-acid chain: uncharacterized protein (448 aa).

Component of the acid-insoluble and acid-soluble organic matrix of the aragonitic skeleton (at protein level).

It is found in the secreted. This is an uncharacterized protein from Acropora millepora (Staghorn coral).